The primary structure comprises 463 residues: ATP synthase subunit beta (463 aa).

152-159 (GGAGVGKT) serves as a coordination point for ATP.

The protein belongs to the ATPase alpha/beta chains family. As to quaternary structure, F-type ATPases have 2 components, CF(1) - the catalytic core - and CF(0) - the membrane proton channel. CF(1) has five subunits: alpha(3), beta(3), gamma(1), delta(1), epsilon(1). CF(0) has three main subunits: a(1), b(2) and c(9-12). The alpha and beta chains form an alternating ring which encloses part of the gamma chain. CF(1) is attached to CF(0) by a central stalk formed by the gamma and epsilon chains, while a peripheral stalk is formed by the delta and b chains.

It is found in the cell inner membrane. It catalyses the reaction ATP + H2O + 4 H(+)(in) = ADP + phosphate + 5 H(+)(out). In terms of biological role, produces ATP from ADP in the presence of a proton gradient across the membrane. The catalytic sites are hosted primarily by the beta subunits. In Shewanella baltica (strain OS223), this protein is ATP synthase subunit beta.